The primary structure comprises 236 residues: Large ribosomal subunit protein uL1 (236 aa).

Belongs to the universal ribosomal protein uL1 family. In terms of assembly, part of the 50S ribosomal subunit.

Its function is as follows. Binds directly to 23S rRNA. The L1 stalk is quite mobile in the ribosome, and is involved in E site tRNA release. In terms of biological role, protein L1 is also a translational repressor protein, it controls the translation of the L11 operon by binding to its mRNA. The chain is Large ribosomal subunit protein uL1 from Kocuria rhizophila (strain ATCC 9341 / DSM 348 / NBRC 103217 / DC2201).